The following is a 269-amino-acid chain: Regulatory protein RecX (269 aa).

It belongs to the RecX family.

It is found in the cytoplasm. In terms of biological role, modulates RecA activity. This Lactococcus lactis subsp. cremoris (strain MG1363) protein is Regulatory protein RecX.